The sequence spans 929 residues: Protocadherin gamma-B7 (929 aa).

Residues 1–30 form the signal peptide; the sequence is MGGSCAQRRRAGPRQVLFPLLLPLFYPTLC. 6 consecutive Cadherin domains span residues 31–133, 134–242, 243–347, 348–452, 453–562, and 570–675; these read EPIR…APQF, QKDE…PPVF, SQDV…SPEI, IITS…APVF, GQSA…APRV, and DGSA…LPDF. Residues 31–691 lie on the Extracellular side of the membrane; the sequence is EPIRYSIPEE…SDSQAEMQFY (661 aa). 2 N-linked (GlcNAc...) asparagine glycosylation sites follow: asparagine 419 and asparagine 545. A helical transmembrane segment spans residues 692–712; it reads LVVALALISVLFLLAVILAIA. The Cytoplasmic portion of the chain corresponds to 713–929; sequence LRLRQSFSPT…KKKSGKKEKK (217 aa). 2 disordered regions span residues 806–838 and 899–929; these read QAPP…WPNN and ATLT…KEKK. Positions 807–838 are enriched in polar residues; sequence APPNTDWRFSQAQRPGTSGSQNGDDTGTWPNN. The span at 919 to 929 shows a compositional bias: basic residues; that stretch reads NKKKSGKKEKK.

It localises to the cell membrane. Its function is as follows. Potential calcium-dependent cell-adhesion protein. May be involved in the establishment and maintenance of specific neuronal connections in the brain. In Pan troglodytes (Chimpanzee), this protein is Protocadherin gamma-B7 (PCDHGB7).